A 247-amino-acid chain; its full sequence is 2-amino-5-formylamino-6-ribosylaminopyrimidin-4(3H)-one 5'-monophosphate deformylase (247 aa).

Residues glutamate 41, histidine 43, aspartate 52, and histidine 121 each contribute to the Fe cation site.

It belongs to the creatininase superfamily. FAPy deformylase family. As to quaternary structure, homodimer. Fe(2+) is required as a cofactor. It depends on Zn(2+) as a cofactor.

It catalyses the reaction 2-amino-5-formylamino-6-(5-phospho-D-ribosylamino)pyrimidin-4(3H)-one + H2O = 2,5-diamino-6-(1-D-ribosylamino)pyrimidin-4(3H)-one 5'-phosphate + formate + H(+). It functions in the pathway cofactor biosynthesis; coenzyme F420 biosynthesis. It participates in cofactor biosynthesis; riboflavin biosynthesis. In terms of biological role, catalyzes the hydrolysis of the formamide of 2-amino-5-formylamino-6-ribosylamino-4(3H)-pyrimidinone 5'-monophosphate (FAPy) to form 2,5-diamino-6-ribosylamino-4(3H)-pyrimidinone 5'-phosphate (APy). The sequence is that of 2-amino-5-formylamino-6-ribosylaminopyrimidin-4(3H)-one 5'-monophosphate deformylase from Methanothermus fervidus (strain ATCC 43054 / DSM 2088 / JCM 10308 / V24 S).